We begin with the raw amino-acid sequence, 906 residues long: Coatomer subunit beta' (906 aa).

8 WD repeats span residues 13 to 52, 55 to 94, 97 to 136, 140 to 180, 183 to 224, 227 to 266, 350 to 388, and 390 to 425; these read ARSDRVKSVDLHPTEPWMLASLYNGSVCVWNHETQTLVKT, VCDLPVRAAKFVARKNWVVTGADDMQIRVFNYNTLERVHM, AHSDYIRCIAVHPTQPFILTSSDDMLIKLWDWDKKWSCSQ, GHTH…PNFT, GHEK…CVQT, GHAQNVSCASFHPELPIIITGSEDGTVRIWHSSTYRLEST, SCEIYPQTIQHNPNGRFVVVCGDGEYIIYTAMALRNKSF, and SAQEFAWAHDSSEYAIRESNSVVKIFKNFKEKKSFK. Lysine 627 carries the post-translational modification N6-acetyllysine. Residues 746-783 form a WD 9 repeat; the sequence is IRTGRLPEAAFLARTYLPSQVSRVVKLWRENLSKVNQK. The segment at 837–862 is disordered; the sequence is EEAKGFQPSRSTAQQELDGKPASPTP. Serine 859 is subject to Phosphoserine. The residue at position 861 (threonine 861) is a Phosphothreonine. Residues 866–890 are a coiled coil; it reads ASHTANKEEKSLLELEVDLDNLELE.

Belongs to the WD repeat COPB2 family. Oligomeric complex that consists of at least the alpha, beta, beta', gamma, delta, epsilon and zeta subunits. Probably interacts with PEX11A. Interacts with SCYL1. Interacts with JAGN1.

The protein resides in the cytoplasm. It is found in the cytosol. It localises to the golgi apparatus membrane. The protein localises to the cytoplasmic vesicle. Its subcellular location is the COPI-coated vesicle membrane. In terms of biological role, the coatomer is a cytosolic protein complex that binds to dilysine motifs and reversibly associates with Golgi non-clathrin-coated vesicles, which further mediate biosynthetic protein transport from the ER, via the Golgi up to the trans Golgi network. Coatomer complex is required for budding from Golgi membranes, and is essential for the retrograde Golgi-to-ER transport of dilysine-tagged proteins. In mammals, the coatomer can only be recruited by membranes associated to ADP-ribosylation factors (ARFs), which are small GTP-binding proteins; the complex also influences the Golgi structural integrity, as well as the processing, activity, and endocytic recycling of LDL receptors. This coatomer complex protein, essential for Golgi budding and vesicular trafficking, is a selective binding protein (RACK) for protein kinase C, epsilon type. It binds to Golgi membranes in a GTP-dependent manner. This chain is Coatomer subunit beta' (COPB2), found in Macaca fascicularis (Crab-eating macaque).